A 344-amino-acid polypeptide reads, in one-letter code: Phenylalanine--tRNA ligase alpha subunit (344 aa).

Glu256 lines the Mg(2+) pocket.

This sequence belongs to the class-II aminoacyl-tRNA synthetase family. Phe-tRNA synthetase alpha subunit type 1 subfamily. Tetramer of two alpha and two beta subunits. Requires Mg(2+) as cofactor.

The protein resides in the cytoplasm. The enzyme catalyses tRNA(Phe) + L-phenylalanine + ATP = L-phenylalanyl-tRNA(Phe) + AMP + diphosphate + H(+). In Geobacillus kaustophilus (strain HTA426), this protein is Phenylalanine--tRNA ligase alpha subunit.